We begin with the raw amino-acid sequence, 503 residues long: Zinc finger and BTB domain-containing protein 37 (503 aa).

One can recognise a BTB domain in the interval 32–96; the sequence is CDIVVNVQGQ…CYTGRICLQL (65 aa). 2 disordered regions span residues 140-206 and 280-344; these read QTRT…SDVE and GHGS…QVEE. The segment covering 144-154 has biased composition (basic and acidic residues); it reads KHQERPPESHR. Over residues 155-167 the composition is skewed to polar residues; the sequence is VTPNLNRSLSPRH. The span at 319-336 shows a compositional bias: basic and acidic residues; the sequence is TERHRARSESPGRMDEPK. C2H2-type zinc fingers lie at residues 373-395, 401-423, and 429-452; these read LTCIYCAKSFNQKGSLDRHMRLH, FVCRMCGKKYTRKDQLEYHIRKH, and FHCHVCGKSFPFQAILNQHFRKNH. Residues 457 to 503 form a disordered region; that stretch reads PLEGPHSISPETTVTSRGQAEEESPSQEETVAPGEAVQGSVSTTGPD. Residues 465–474 show a composition bias toward polar residues; it reads SPETTVTSRG.

The protein localises to the nucleus. Its function is as follows. May be involved in transcriptional regulation. This is Zinc finger and BTB domain-containing protein 37 (ZBTB37) from Homo sapiens (Human).